Consider the following 684-residue polypeptide: MANSQPKASQQRQAKVMTAAAGSASRVAVPLLLCALLVPGGAYVLDDSDGLGREFDGIGAVSGGGATSRLLVNYPEPYRSEILDYLFKPNFGASLHILKVEIGGDGQTTDGTEPSHMHYELDENYFRGYEWWLMKEAKKRNPDIILMGLPWSFPGWLGKGFSWPYVNLQLTAYYVVRWILGAKHYHDLDIDYIGIWNERPFDANYIKELRKMLDYQGLQRVRIIASDNLWEPISSSLLLDQELWKVVDVIGAHYPGTYTVWNAKMSGKKLWSSEDFSTINSNVGAGCWSRILNQNYINGNMTSTIAWNLVASYYEELPYGRSGLMTAQEPWSGHYVVASPIWVSAHTTQFTQPGWYYLKTVGHLEKGGSYVALTDGLGNLTIIIETMSHQHSMCIRPYLPYYNVSHQLATFTLKGSLREIQELQVWYTKLGTPQQRLHFKQLDTLWLLDGSGSFTLELEEDEIFTLTTLTTGRKGSYPPPPSSKPFPTNYKDDFNVEYPLFSEAPNFADQTGVFEYYMNNEDREHRFTLRQVLNQRPITWAADASSTISVIGDHHWTNMTVQCDVYIETPRSGGVFIAGRVNKGGILIRSATGVFFWIFANGSYRVTADLGGWITYASGHADVTAKRWYTLTLGIKGYFAFGMLNGTILWKNVRVKYPGHGWAAIGTHTFEFAQFDNFRVEAAR.

The signal sequence occupies residues 1 to 42 (MANSQPKASQQRQAKVMTAAAGSASRVAVPLLLCALLVPGGA). Positions 109, 151, and 197 each coordinate substrate. The Proton donor/acceptor role is filled by glutamate 198. The Nucleophile role is filled by glutamate 274. Cysteine 287 and cysteine 394 form a disulfide bridge. Residues asparagine 300 and asparagine 379 are each glycosylated (N-linked (GlcNAc...) asparagine). Arginine 396 is a substrate binding site. Asparagine 403, asparagine 558, asparagine 601, and asparagine 645 each carry an N-linked (GlcNAc...) asparagine glycan.

This sequence belongs to the glycosyl hydrolase 59 family. As to expression, detected in brain and kidney.

The protein resides in the lysosome. It carries out the reaction a beta-D-galactosyl-(1&lt;-&gt;1')-N-acylsphing-4-enine + H2O = an N-acylsphing-4-enine + D-galactose. The enzyme catalyses a D-galactosylceramide + H2O = an N-acyl-sphingoid base + D-galactose. The catalysed reaction is beta-D-galactosyl-(1&lt;-&gt;1)-sphing-4-enine + H2O = sphing-4-enine + D-galactose. Its function is as follows. Hydrolyzes the galactose ester bonds of glycolipids such as galactosylceramide and galactosylsphingosine. Enzyme with very low activity responsible for the lysosomal catabolism of galactosylceramide, a major lipid in myelin, kidney and epithelial cells of small intestine and colon. This is Galactocerebrosidase from Mus musculus (Mouse).